The chain runs to 250 residues: MGRGRVELKMIENKINRQVTFAKRRKRLLKKAYELSVLCDAEVALIIFSNRGKLYEFCSSTSMLKTLEKYQKCNFGSPESTIISRETQSSQQEYLKLKNRVEALQRSQRNLLGEDLGPLGSKELEQLERQLDSSLRQIRSTRTQFMLDQLADLQRREQMLCEANKTLKRRFEESSQANQQQVWDPSNTHAVGYGRQPAQHHGEAFYHPLECEPTLQIGYHSDITMATATASTVNNYMPPGWLGQISGSYE.

The MADS-box domain maps to 3 to 57 (RGRVELKMIENKINRQVTFAKRRKRLLKKAYELSVLCDAEVALIIFSNRGKLYEF). The K-box domain maps to 87 to 177 (TQSSQQEYLK…KRRFEESSQA (91 aa)).

As to expression, expressed in petals and weakly in sepals but not in the column (gynostemium).

It is found in the nucleus. Probable transcription factor active in inflorescence development and floral organogenesis. The sequence is that of Agamous-like MADS-box protein AGL9 homolog from Aranda deborah (Orchid).